A 187-amino-acid chain; its full sequence is Ribosome-recycling factor (187 aa).

The protein belongs to the RRF family.

The protein localises to the cytoplasm. In terms of biological role, responsible for the release of ribosomes from messenger RNA at the termination of protein biosynthesis. May increase the efficiency of translation by recycling ribosomes from one round of translation to another. In Methylobacterium nodulans (strain LMG 21967 / CNCM I-2342 / ORS 2060), this protein is Ribosome-recycling factor.